The primary structure comprises 171 residues: MTRQSAYSRDQLLASARGELFAPDSGRLPNDPMLMFDRITEISDTGGAHGKGVIRAELDIRPDLWFFGCHFIGDPVMPGCLGLDAMWQLTGFFLTWIGAQGRGRALGCGEVKFTGQVLPSAQLVRYEIDVSRVINRKLVMAQTDARMLVDGREIYVAKDLRVGMFTSTENF.

The active site involves His-70.

The protein belongs to the thioester dehydratase family. FabA subfamily. Homodimer.

Its subcellular location is the cytoplasm. The enzyme catalyses a (3R)-hydroxyacyl-[ACP] = a (2E)-enoyl-[ACP] + H2O. It carries out the reaction (3R)-hydroxydecanoyl-[ACP] = (2E)-decenoyl-[ACP] + H2O. The catalysed reaction is (2E)-decenoyl-[ACP] = (3Z)-decenoyl-[ACP]. It participates in lipid metabolism; fatty acid biosynthesis. Its function is as follows. Necessary for the introduction of cis unsaturation into fatty acids. Catalyzes the dehydration of (3R)-3-hydroxydecanoyl-ACP to E-(2)-decenoyl-ACP and then its isomerization to Z-(3)-decenoyl-ACP. Can catalyze the dehydratase reaction for beta-hydroxyacyl-ACPs with saturated chain lengths up to 16:0, being most active on intermediate chain length. This Xanthomonas oryzae pv. oryzae (strain MAFF 311018) protein is 3-hydroxydecanoyl-[acyl-carrier-protein] dehydratase.